A 592-amino-acid polypeptide reads, in one-letter code: Aspartate--tRNA(Asp/Asn) ligase (592 aa).

Glutamate 175 is an L-aspartate binding site. The aspartate stretch occupies residues 199–202; it reads QLFK. Arginine 221 contributes to the L-aspartate binding site. ATP-binding positions include 221–223 and glutamine 230; that span reads RDE. Residue histidine 450 participates in L-aspartate binding. Glutamate 483 contacts ATP. Position 490 (arginine 490) interacts with L-aspartate. An ATP-binding site is contributed by 535–538; the sequence is GLDR.

This sequence belongs to the class-II aminoacyl-tRNA synthetase family. Type 1 subfamily. In terms of assembly, homodimer.

It is found in the cytoplasm. The enzyme catalyses tRNA(Asx) + L-aspartate + ATP = L-aspartyl-tRNA(Asx) + AMP + diphosphate. Aspartyl-tRNA synthetase with relaxed tRNA specificity since it is able to aspartylate not only its cognate tRNA(Asp) but also tRNA(Asn). Reaction proceeds in two steps: L-aspartate is first activated by ATP to form Asp-AMP and then transferred to the acceptor end of tRNA(Asp/Asn). The protein is Aspartate--tRNA(Asp/Asn) ligase of Acinetobacter baumannii (strain AB307-0294).